Reading from the N-terminus, the 1210-residue chain is Histone-lysine N-methyltransferase EHMT2 (1210 aa).

Over residues 1 to 23 the composition is skewed to low complexity; that stretch reads MAAAAGAAAAAAAEGEAPAEMGA. 2 disordered regions span residues 1–262 and 280–386; these read MAAA…LEEW and DERV…EYME. N-acetylalanine is present on Ala2. The segment covering 26-38 has biased composition (basic and acidic residues); the sequence is LEKETRGATERVH. Ser40 bears the Phosphoserine mark. The residue at position 44 (Thr44) is a Phosphothreonine. Ser47 is modified (phosphoserine). Residues 105–128 show a composition bias toward low complexity; that stretch reads GRILLGHATKSFPSSPSKGGSCPS. Ser140 carries the phosphoserine modification. A compositionally biased stretch (low complexity) spans 155–165; the sequence is PGAQGAAAAGS. Ser173 is subject to Phosphoserine. Residue Lys185 is modified to N6,N6,N6-trimethyllysine; by EHMT2; alternate. At Lys185 the chain carries N6,N6-dimethyllysine; by EHMT2; alternate. Residues 198–216 show a composition bias toward basic and acidic residues; the sequence is PEKRPPEIQHFRMSDDVHS. Glycyl lysine isopeptide (Lys-Gly) (interchain with G-Cter in SUMO2) cross-links involve residues Lys219 and Lys229. Phosphoserine is present on residues Ser232, Ser242, and Ser246. A compositionally biased stretch (basic and acidic residues) spans 280–291; that stretch reads DERVDSDSKSEV. Acidic residues predominate over residues 298–327; sequence LSEEEEEEEEEEEEEEEEEEEEEEEEDEES. Residues 338–347 are compositionally biased toward basic residues; sequence GRRKAKKKWR. Residues Ser350, Ser412, and Ser413 each carry the phosphoserine modification. The interval 548-608 is disordered; it reads IPRGDGVTPP…LADTIDSSGP (61 aa). The residue at position 555 (Thr555) is a Phosphothreonine. Ser569 carries the phosphoserine modification. Lys634 is covalently cross-linked (Glycyl lysine isopeptide (Lys-Gly) (interchain with G-Cter in SUMO2)). ANK repeat units follow at residues 649 to 678, 684 to 713, 717 to 746, 750 to 780, 784 to 813, 817 to 846, and 850 to 879; these read FHPR…DPNF, SKRT…NINA, QQRT…CVYS, DGST…DVNA, GGWT…DVTL, EENI…DLHA, and HGDT…NPEL. A histone H3K9me binding region spans residues 817-819; sequence EEN. The Pre-SET domain occupies 972 to 1035; sequence QHCTCVDDCS…NCKNRVVQSG (64 aa). Zn(2+)-binding residues include Cys974, Cys976, Cys980, Cys985, Cys987, Cys1017, Cys1021, Cys1023, and Cys1027. Residues 1038–1155 enclose the SET domain; it reads VRLQLYRTAK…TGEELGFDYG (118 aa). Residues 1048-1050, Tyr1085, and 1112-1113 contribute to the S-adenosyl-L-methionine site; these read MGW and NH. The segment at 1074–1093 is interaction with histone H3; that stretch reads DAEADVREDDSYLFDLDNKD. Cys1115 lines the Zn(2+) pocket. Positions 1154-1157 are interaction with histone H3; the sequence is YGDR. In terms of domain architecture, Post-SET spans 1164–1180; the sequence is KYFTCQCGSEKCKHSAE. Position 1168 (Cys1168) interacts with Zn(2+). Residue Gln1169 participates in S-adenosyl-L-methionine binding. Cys1170 and Cys1175 together coordinate Zn(2+). Ser1204 carries the post-translational modification Phosphoserine. Thr1210 is modified (phosphothreonine).

Belongs to the class V-like SAM-binding methyltransferase superfamily. Histone-lysine methyltransferase family. Suvar3-9 subfamily. In terms of assembly, heterodimer; heterodimerizes with EHMT1/GLP. Interacts with GFI1B and WIZ. Part of the E2F6.com-1 complex in G0 phase composed of E2F6, MGA, MAX, TFDP1, CBX3, BAT8, EHMT1, RING1, RNF2, MBLR, L3MBTL2 and YAF2. Part of a complex composed of TRIM28, HDAC1, HDAC2 and EHMT2. Interacts with UHRF1. Interacts with CDYL. Interacts with REST only in the presence of CDYL. Part of a complex containing at least CDYL, REST, WIZ, SETB1, EHMT1 and EHMT2. Interacts with PRDM9 and CDYL; interaction only takes place when PRDM9 is bound to hotspot DNA. Interacts with SMYD5. Post-translationally, methylated at Lys-185; automethylated. In terms of tissue distribution, expressed in all tissues examined, with high levels in fetal liver, thymus, lymph node, spleen and peripheral blood leukocytes and lower level in bone marrow.

It localises to the nucleus. The protein resides in the chromosome. The enzyme catalyses N(6)-methyl-L-lysyl(9)-[histone H3] + S-adenosyl-L-methionine = N(6),N(6)-dimethyl-L-lysyl(9)-[histone H3] + S-adenosyl-L-homocysteine + H(+). It carries out the reaction L-lysyl(9)-[histone H3] + S-adenosyl-L-methionine = N(6)-methyl-L-lysyl(9)-[histone H3] + S-adenosyl-L-homocysteine + H(+). In terms of biological role, histone methyltransferase that specifically mono- and dimethylates 'Lys-9' of histone H3 (H3K9me1 and H3K9me2, respectively) in euchromatin. H3K9me represents a specific tag for epigenetic transcriptional repression by recruiting HP1 proteins to methylated histones. Also mediates monomethylation of 'Lys-56' of histone H3 (H3K56me1) in G1 phase, leading to promote interaction between histone H3 and PCNA and regulating DNA replication. Also weakly methylates 'Lys-27' of histone H3 (H3K27me). Also required for DNA methylation, the histone methyltransferase activity is not required for DNA methylation, suggesting that these 2 activities function independently. Probably targeted to histone H3 by different DNA-binding proteins like E2F6, MGA, MAX and/or DP1. May also methylate histone H1. In addition to the histone methyltransferase activity, also methylates non-histone proteins: mediates dimethylation of 'Lys-373' of p53/TP53. Also methylates CDYL, WIZ, ACIN1, DNMT1, HDAC1, ERCC6, KLF12 and itself. This is Histone-lysine N-methyltransferase EHMT2 (EHMT2) from Homo sapiens (Human).